Consider the following 255-residue polypeptide: tRNA (guanine-N(1)-)-methyltransferase (255 aa).

S-adenosyl-L-methionine is bound by residues glycine 113 and 133 to 138; that span reads IGDYVL.

This sequence belongs to the RNA methyltransferase TrmD family. Homodimer.

The protein localises to the cytoplasm. It carries out the reaction guanosine(37) in tRNA + S-adenosyl-L-methionine = N(1)-methylguanosine(37) in tRNA + S-adenosyl-L-homocysteine + H(+). In terms of biological role, specifically methylates guanosine-37 in various tRNAs. This is tRNA (guanine-N(1)-)-methyltransferase from Escherichia coli O6:K15:H31 (strain 536 / UPEC).